The following is a 152-amino-acid chain: MAGFIGKERHAIDEKGRLMIPARFRRKFESVTVEGVADAFSGLYIMKAPDRSLELYEPLIWAGMRKSLSGLSDFNPEERLLKTLMYESLEMVELDRQGRVALSREFLDHAGITKDVVIIGADTKMIIWDPQRLAALLQESADRFASLAGRYF.

SpoVT-AbrB domains are found at residues 7–51 (KERH…APDR) and 89–132 (LEMV…DPQR).

The protein belongs to the MraZ family. Forms oligomers.

The protein resides in the cytoplasm. It is found in the nucleoid. This is Transcriptional regulator MraZ from Pelodictyon phaeoclathratiforme (strain DSM 5477 / BU-1).